The chain runs to 299 residues: Hemolysin C homolog (299 aa).

2 consecutive CBS domains span residues 80 to 142 and 145 to 202; these read MVPR…NGRL and LIRK…IDDE.

This sequence belongs to the UPF0053 family. Hemolysin C subfamily.

The protein is Hemolysin C homolog (tlyC) of Rickettsia conorii (strain ATCC VR-613 / Malish 7).